The primary structure comprises 418 residues: Tyrosine--tRNA ligase (418 aa).

Tyr38 provides a ligand contact to L-tyrosine. The 'HIGH' region signature appears at 43 to 52 (CTAKSLHVGS). 2 residues coordinate L-tyrosine: Tyr175 and Gln179. The 'KMSKS' region signature appears at 235 to 239 (KMGKT). Lys238 is an ATP binding site. In terms of domain architecture, S4 RNA-binding spans 348–413 (LPIIKLLQIS…CGKKRHLKIM (66 aa)).

It belongs to the class-I aminoacyl-tRNA synthetase family. TyrS type 1 subfamily. In terms of assembly, homodimer.

It is found in the cytoplasm. It catalyses the reaction tRNA(Tyr) + L-tyrosine + ATP = L-tyrosyl-tRNA(Tyr) + AMP + diphosphate + H(+). Functionally, catalyzes the attachment of tyrosine to tRNA(Tyr) in a two-step reaction: tyrosine is first activated by ATP to form Tyr-AMP and then transferred to the acceptor end of tRNA(Tyr). The chain is Tyrosine--tRNA ligase from Ehrlichia canis (strain Jake).